The following is a 187-amino-acid chain: dITP/XTP pyrophosphatase (187 aa).

Residue 7 to 12 (TNNPYK) coordinates substrate. 2 residues coordinate Mg(2+): E36 and D65. D65 acts as the Proton acceptor in catalysis. Substrate-binding positions include T66, 140 to 143 (FGYD), K163, and 168 to 169 (HR).

This sequence belongs to the HAM1 NTPase family. Homodimer. Mg(2+) is required as a cofactor.

It carries out the reaction XTP + H2O = XMP + diphosphate + H(+). It catalyses the reaction dITP + H2O = dIMP + diphosphate + H(+). The enzyme catalyses ITP + H2O = IMP + diphosphate + H(+). Its function is as follows. Pyrophosphatase that catalyzes the hydrolysis of nucleoside triphosphates to their monophosphate derivatives, with a high preference for the non-canonical purine nucleotides XTP (xanthosine triphosphate), dITP (deoxyinosine triphosphate) and ITP. Seems to function as a house-cleaning enzyme that removes non-canonical purine nucleotides from the nucleotide pool, thus preventing their incorporation into DNA/RNA and avoiding chromosomal lesions. The polypeptide is dITP/XTP pyrophosphatase (Pyrobaculum aerophilum (strain ATCC 51768 / DSM 7523 / JCM 9630 / CIP 104966 / NBRC 100827 / IM2)).